A 139-amino-acid chain; its full sequence is Endoribonuclease YbeY (139 aa).

Residues histidine 107, histidine 111, and aspartate 117 each coordinate Zn(2+).

It belongs to the endoribonuclease YbeY family. Zn(2+) serves as cofactor.

The protein resides in the cytoplasm. In terms of biological role, single strand-specific metallo-endoribonuclease involved in late-stage 70S ribosome quality control and in maturation of the 3' terminus of the 16S rRNA. This is Endoribonuclease YbeY from Bacteroides fragilis (strain ATCC 25285 / DSM 2151 / CCUG 4856 / JCM 11019 / LMG 10263 / NCTC 9343 / Onslow / VPI 2553 / EN-2).